The chain runs to 961 residues: Translation initiation factor IF-2 (961 aa).

Residues 146–158 (PSVPNKTLTTTPH) are compositionally biased toward polar residues. The segment at 146-373 (PSVPNKTLTT…KTTSQVTTQP (228 aa)) is disordered. Residues 163 to 176 (NHSEKDVLESHDSS) are compositionally biased toward basic and acidic residues. Over residues 177–187 (NKNIKQSSSQN) the composition is skewed to low complexity. A compositionally biased stretch (basic and acidic residues) spans 230-239 (SEEKNVDIQQ). 2 stretches are compositionally biased toward polar residues: residues 241–285 (EIPS…TAPH) and 301–310 (YQGQNRNNFI). Residues 355 to 364 (NRGRKRHKQK) are compositionally biased toward basic residues. The 168-residue stretch at 460–627 (RRPPVVTIMG…LLALQTDILE (168 aa)) folds into the tr-type G domain. The segment at 469–476 (GHVDHGKT) is G1. 469–476 (GHVDHGKT) serves as a coordination point for GTP. Residues 494-498 (GITQH) are G2. The interval 515–518 (DTPG) is G3. Residues 515-519 (DTPGH) and 569-572 (NKMD) contribute to the GTP site. Residues 569 to 572 (NKMD) form a G4 region. The G5 stretch occupies residues 605–607 (SAK).

Belongs to the TRAFAC class translation factor GTPase superfamily. Classic translation factor GTPase family. IF-2 subfamily.

It localises to the cytoplasm. In terms of biological role, one of the essential components for the initiation of protein synthesis. Protects formylmethionyl-tRNA from spontaneous hydrolysis and promotes its binding to the 30S ribosomal subunits. Also involved in the hydrolysis of GTP during the formation of the 70S ribosomal complex. This Lawsonia intracellularis (strain PHE/MN1-00) protein is Translation initiation factor IF-2.